The primary structure comprises 582 residues: Two-component response regulator ORR26 (582 aa).

The Response regulatory domain maps to 11–126 (RVLVVDDDPT…ELRNIWQHVY (116 aa)). The residue at position 62 (Asp-62) is a 4-aspartylphosphate. A compositionally biased stretch (basic and acidic residues) spans 166-182 (SDTMRKRKDVDKDHADQ). Residues 166 to 187 (SDTMRKRKDVDKDHADQESSDG) form a disordered region. Positions 189-248 (TVKKARVVWSVDLHQKFVNAVNQIGFDKVGPKKILDLMNVPGLTRENVASHLQKYRLYLS) form a DNA-binding region, myb-like GARP.

The protein belongs to the ARR family. Type-B subfamily. In terms of processing, two-component system major event consists of a His-to-Asp phosphorelay between a sensor histidine kinase (HK) and a response regulator (RR). In plants, the His-to-Asp phosphorelay involves an additional intermediate named Histidine-containing phosphotransfer protein (HPt). This multistep phosphorelay consists of a His-Asp-His-Asp sequential transfer of a phosphate group between first a His and an Asp of the HK protein, followed by the transfer to a conserved His of the HPt protein and finally the transfer to an Asp in the receiver domain of the RR protein.

It localises to the nucleus. Functionally, transcriptional activator that binds specific DNA sequence. Functions as a response regulator involved in His-to-Asp phosphorelay signal transduction system. Phosphorylation of the Asp residue in the receiver domain activates the ability of the protein to promote the transcription of target genes. May directly activate some type-A response regulators in response to cytokinins. The sequence is that of Two-component response regulator ORR26 from Oryza sativa subsp. japonica (Rice).